The following is a 251-amino-acid chain: uncharacterized protein (251 aa).

This is an uncharacterized protein from Methanocaldococcus jannaschii (strain ATCC 43067 / DSM 2661 / JAL-1 / JCM 10045 / NBRC 100440) (Methanococcus jannaschii).